The chain runs to 381 residues: Curved DNA-binding protein (381 aa).

Ser8 is modified (phosphoserine). Thr362 is subject to Phosphothreonine. A Nuclear localization signal motif is present at residues 368–375 (KNKKKSKK).

It belongs to the peptidase M24 family.

The protein localises to the nucleus. In terms of biological role, a non-essential protein that preferentially binds curved DNA. Binds non-curved DNA with a much lower affinity. In Schizosaccharomyces pombe (strain 972 / ATCC 24843) (Fission yeast), this protein is Curved DNA-binding protein (cdb4).